A 502-amino-acid chain; its full sequence is MRDPLTDCSYNKVYKSLKEFAQNGDNFCKQITSVLQQRANLEISYAKGLQKLAVKLSKALQSTKKNCLSTAWAWASESMKSAADLHQKLGKAIELEAIKPTHQVLSMQEKKRKSLDNEVEKSANLVINNWNQQIKAKKKLMMSTKKHEALFHLIESSKQSMTQKEKQKLLNKLKKSTEKLEKEDESYYQKNMAGYSTRLKWESTLEKCYKSMLELEKERIQLLCNNLNQYSQHISLFGQTLTTCHTQIHCAISKVDVEKDIQALMEETAVLSLENKSELLLADYFEEDPKNPMDKERRKSLIKPKLWRLQKDIEKASRDKEGLEQKLKALASSASFSDAKSQKDAETLMDENSLKLDLLQANSYKLSTVLADLEQRPKPCHPCSNCIFKWKEKEHSHSYVKISRPLLTKRLEKAESKAPAGEQNNPSSSRPGSSVSQGNNQLCKALYTFQARQDDELNLEKGDIVTIHEKKEEGWWFGSLNGKKGHFPAAYVEELPPKAGQA.

Residues 1–260 (MRDPLTDCSY…AISKVDVEKD (260 aa)) enclose the F-BAR domain. The residue at position 114 (Ser114) is a Phosphoserine. 2 coiled-coil regions span residues 160–230 (SMTQ…LNQY) and 305–335 (KLWR…SSAS). Residues 292-372 (PMDKERRKSL…SYKLSTVLAD (81 aa)) form the REM-1 domain. The disordered stretch occupies residues 413 to 437 (KAESKAPAGEQNNPSSSRPGSSVSQ). Residues 423 to 437 (QNNPSSSRPGSSVSQ) are compositionally biased toward low complexity. Residues 438–497 (GNNQLCKALYTFQARQDDELNLEKGDIVTIHEKKEEGWWFGSLNGKKGHFPAAYVEELPP) enclose the SH3 domain. Ser479 carries the phosphoserine modification.

Homotrimer. Interacts with DAB2. Interacts with NOS3, WASL and CAV1. Interacts (via SH3 domain) with DNM2; this interaction allows the recruitment of NOS3 to dynamin-positive structures. As to expression, over-expressed in brain microcapillaries from spontaneously hypertensive rats.

The protein resides in the cell membrane. Its subcellular location is the cytoplasmic vesicle. The protein localises to the cytoplasm. It localises to the cytoskeleton. It is found in the nucleus. Multivalent adapter protein which may decrease NOS3 activity by inducing its translocation away from the plasma membrane. In Rattus norvegicus (Rat), this protein is Nostrin.